A 782-amino-acid chain; its full sequence is LPS-assembly protein LptD (782 aa).

The N-terminal stretch at 1 to 23 (MNKKHTLISLAILTALYSQQSLA) is a signal peptide.

This sequence belongs to the LptD family. In terms of assembly, component of the lipopolysaccharide transport and assembly complex. Interacts with LptE and LptA.

It localises to the cell outer membrane. Functionally, together with LptE, is involved in the assembly of lipopolysaccharide (LPS) at the surface of the outer membrane. The protein is LPS-assembly protein LptD of Haemophilus influenzae (strain ATCC 51907 / DSM 11121 / KW20 / Rd).